The sequence spans 531 residues: MDTTNQSEDIKPCDSDLMESILMFDEPISDILAHNKLWISHARTRSNFFPQEGRHISNQHTEAATSLKMWMLSKNLVVIVKRKDDIFPCKILTRNPENLFVARFLESGKEKHIQVEYSDIIMTRSELEKALPLCQHLIPARNWDDFYIIRDFEKATPYFEQGLSALVKPGQQFELQLEDAPDFYVMATVVKNYRGFLLVEYQNFKRWIHMLSPYCHEIGWGKNEKQEYLKRGPYNRHMNVDLVAGLVKQSTNQKLGAVPEIVFRNNCPVPHRIPEYSACVYLDLDQKRFYFAHKVTTKTCRNNRHFFNISIGKNLVTSKQNNRPYEFHVYHPRILPYSVAKRMEVQIILPPDVKLLPDESNLDGYLRTYCNPCDKHKTSDRVQPSPKIAKKKNGPLLLDDTPDAMFRSRPLLGDNIGAHKEWTNFMNHIPDYKRKDLLKSMDTLKFCEIFRPTPTGALQLTAAEVTGQQECMLRLKVSGEDEPVYIHNADPHLYHLGACLDMELAINFHGEFFDEKPLKKNKNANNGFSSF.

As to expression, expressed ubiquitously.

The protein resides in the cytoplasm. Its subcellular location is the nucleus. Probably acts synergistically with sop-2 to maintain the transcriptionally repressive state of homeotic genes in order to regulate various neurogenic identities. Specification of some neuronal identities also involves expression of non-Hox genes. Specifies dopaminergic and serotonergic neuronal cell fate, and regulates neurotransmitter choice and axon pathfinding. The protein is Sop-2-related protein 3 (sor-3) of Caenorhabditis elegans.